The primary structure comprises 356 residues: Protein RecA (356 aa).

79–86 lines the ATP pocket; the sequence is GPESSGKT.

It belongs to the RecA family.

It is found in the cytoplasm. Functionally, can catalyze the hydrolysis of ATP in the presence of single-stranded DNA, the ATP-dependent uptake of single-stranded DNA by duplex DNA, and the ATP-dependent hybridization of homologous single-stranded DNAs. It interacts with LexA causing its activation and leading to its autocatalytic cleavage. The sequence is that of Protein RecA from Borrelia hermsii (strain HS1 / DAH).